Here is a 317-residue protein sequence, read N- to C-terminus: MYTKIIGTGSYLPEEIRTNADLEKMVETTDEWIVTRTGIRERRIAAPDENVATMGYRAAQKALEMANVDASEVGLLIVATTSSSHAFPSSACQVQQLLGIKDTIAFDLAAACAGFTYALSVADQYVKSGAVKYALVIGSDTLSRTLDPEDRGTLILFGDGAGAVLLTTSEQPGILSTHLHADGRYGELLTLPHQDRNHTDKPAYLTMAGNEVFKVAVTELAHIVEETLQAAQLDKSELDWLVPHQANLRIISATAKKLGMGMDKVVVTLDRHGNTSAASVPSALDEAVRDGRIKPGQLVLLEAFGGGFTWGSALVRF.

Catalysis depends on residues C112 and H244. An ACP-binding region spans residues 245–249; that stretch reads QANLR. The active site involves N274.

It belongs to the thiolase-like superfamily. FabH family. In terms of assembly, homodimer.

It localises to the cytoplasm. It catalyses the reaction malonyl-[ACP] + acetyl-CoA + H(+) = 3-oxobutanoyl-[ACP] + CO2 + CoA. Its pathway is lipid metabolism; fatty acid biosynthesis. Catalyzes the condensation reaction of fatty acid synthesis by the addition to an acyl acceptor of two carbons from malonyl-ACP. Catalyzes the first condensation reaction which initiates fatty acid synthesis and may therefore play a role in governing the total rate of fatty acid production. Possesses both acetoacetyl-ACP synthase and acetyl transacylase activities. Its substrate specificity determines the biosynthesis of branched-chain and/or straight-chain of fatty acids. This chain is Beta-ketoacyl-[acyl-carrier-protein] synthase III, found in Pectobacterium atrosepticum (strain SCRI 1043 / ATCC BAA-672) (Erwinia carotovora subsp. atroseptica).